The following is a 233-amino-acid chain: Leucyl/phenylalanyl-tRNA--protein transferase (233 aa).

It belongs to the L/F-transferase family.

Its subcellular location is the cytoplasm. It catalyses the reaction N-terminal L-lysyl-[protein] + L-leucyl-tRNA(Leu) = N-terminal L-leucyl-L-lysyl-[protein] + tRNA(Leu) + H(+). The catalysed reaction is N-terminal L-arginyl-[protein] + L-leucyl-tRNA(Leu) = N-terminal L-leucyl-L-arginyl-[protein] + tRNA(Leu) + H(+). It carries out the reaction L-phenylalanyl-tRNA(Phe) + an N-terminal L-alpha-aminoacyl-[protein] = an N-terminal L-phenylalanyl-L-alpha-aminoacyl-[protein] + tRNA(Phe). Functions in the N-end rule pathway of protein degradation where it conjugates Leu, Phe and, less efficiently, Met from aminoacyl-tRNAs to the N-termini of proteins containing an N-terminal arginine or lysine. In Chromobacterium violaceum (strain ATCC 12472 / DSM 30191 / JCM 1249 / CCUG 213 / NBRC 12614 / NCIMB 9131 / NCTC 9757 / MK), this protein is Leucyl/phenylalanyl-tRNA--protein transferase.